The chain runs to 236 residues: Small ribosomal subunit protein uS2c (236 aa).

It belongs to the universal ribosomal protein uS2 family.

Its subcellular location is the plastid. It is found in the chloroplast. The polypeptide is Small ribosomal subunit protein uS2c (rps2) (Calycanthus floridus var. glaucus (Eastern sweetshrub)).